A 388-amino-acid chain; its full sequence is GDP-4-keto-6-deoxy-D-mannose 3-dehydratase (388 aa).

GDP-4-dehydro-alpha-D-rhamnose is bound at residue 26-29; that stretch reads KMFT. The chain crosses the membrane as a helical span at residues 49-69; sequence YAVMVSSGSTANLLMIAALFF. Pyridoxal 5'-phosphate contacts are provided by residues 56–57, Trp88, Glu162, and Ser183; that span reads GS. The active-site Proton donor/acceptor is the His188. Residue His215 participates in L-glutamate binding. Position 219 (Arg219) interacts with GDP-4-dehydro-alpha-D-rhamnose. Asn248 provides a ligand contact to pyridoxal 5'-phosphate. Arg250 serves as a coordination point for L-glutamate. Glu329 lines the GDP-4-dehydro-alpha-D-rhamnose pocket.

Belongs to the DegT/DnrJ/EryC1 family. As to quaternary structure, homodimer. Pyridoxal 5'-phosphate serves as cofactor.

Its subcellular location is the cell membrane. The enzyme catalyses GDP-4-dehydro-alpha-D-rhamnose + L-glutamate = GDP-4-dehydro-3,6-dideoxy-alpha-D-mannose + 2-oxoglutarate + NH4(+). Its pathway is nucleotide-sugar metabolism; GDP-L-colitose biosynthesis. Its function is as follows. Involved in the biosynthesis of L-colitose, a 3,6-dideoxyhexose present in the O-antigen region of lipopolysaccharides (LPS), where it serves as an antigenic determinant and is vital for bacterial defense and survival. Catalyzes the removal of the C3'-hydroxyl group from GDP-4-keto-6-deoxy-D-mannose via a combined transamination-deoxygenation reaction. The catalysis is initiated by a transamination step in which pyridoxal 5'-phosphate (PLP) is converted to pyridoxamine 5'-phosphate (PMP) in the presence of L-glutamate. This coenzyme then forms a Schiff base with GDP-4-keto-6-deoxy-D-mannose and the resulting adduct undergoes a PMP-mediated beta-dehydration reaction to give a sugar enamine intermediate, which after tautomerization and hydrolysis to release ammonia yields GDP-4-keto-3,6-dideoxy-D-mannose as a product. In vitro, is able to catalyze the formation of GDP-4-keto-3,6-dideoxymannose using GDP-perosamine rather than GDP-4-keto-6-deoxymannose as a substrate, with no need of glutamate. This Escherichia coli O55:H7 (strain CB9615 / EPEC) protein is GDP-4-keto-6-deoxy-D-mannose 3-dehydratase.